A 370-amino-acid polypeptide reads, in one-letter code: ADP-ribosylhydrolase ARH3 (370 aa).

Mg(2+)-binding residues include E35, D66, and D67. D66 is a substrate binding site. Residues 135 to 141, H171, L225, and I261 each bind substrate; that span reads RGSFGNG. 3 residues coordinate Mg(2+): D304, D306, and T307.

This sequence belongs to the ADP-ribosylglycohydrolase family. Monomer. Requires Mg(2+) as cofactor.

The protein localises to the nucleus. Its subcellular location is the cytoplasm. It localises to the chromosome. The protein resides in the mitochondrion matrix. The catalysed reaction is [(1''-&gt;2')-ADP-alpha-D-ribose](n) + H2O = [(1''-&gt;2')-ADP-alpha-D-ribose](n-1) + ADP-D-ribose. It carries out the reaction 1''-O-acetyl-ADP-alpha-D-ribose + H2O = ADP-D-ribose + acetate + H(+). The enzyme catalyses O-(ADP-D-ribosyl)-L-seryl-[protein] + H2O = ADP-D-ribose + L-seryl-[protein]. It catalyses the reaction alpha-NAD(+) + H2O = ADP-D-ribose + nicotinamide + H(+). The protein undergoes a dramatic conformational switch from closed to open states upon substrate-binding, which enables specific substrate recognition for the 1''-O-linkage. The glutamate flap (Glu-35) blocks substrate entrance to Mg(2+) in the unliganded closed state. In presence of substrate, Glu-35 is ejected from the active site: this closed-to-open transition significantly widens the substrate-binding channel and precisely positions the scissile 1''-O-linkage for cleavage while securing tightly 2'- and 3'-hydroxyls of ADP-ribose. Functionally, ADP-ribosylhydrolase that preferentially hydrolyzes the scissile alpha-O-linkage attached to the anomeric C1'' position of ADP-ribose and acts on different substrates, such as proteins ADP-ribosylated on serine and threonine, free poly(ADP-ribose) and O-acetyl-ADP-D-ribose. Specifically acts as a serine mono-ADP-ribosylhydrolase by mediating the removal of mono-ADP-ribose attached to serine residues on proteins, thereby playing a key role in DNA damage response. Serine ADP-ribosylation of proteins constitutes the primary form of ADP-ribosylation of proteins in response to DNA damage. Does not hydrolyze ADP-ribosyl-arginine, -cysteine, -diphthamide, or -asparagine bonds. Also able to degrade protein free poly(ADP-ribose), which is synthesized in response to DNA damage: free poly(ADP-ribose) acts as a potent cell death signal and its degradation by ADPRHL2 protects cells from poly(ADP-ribose)-dependent cell death, a process named parthanatos. Also hydrolyzes free poly(ADP-ribose) in mitochondria. Specifically digests O-acetyl-ADP-D-ribose, a product of deacetylation reactions catalyzed by sirtuins. Specifically degrades 1''-O-acetyl-ADP-D-ribose isomer, rather than 2''-O-acetyl-ADP-D-ribose or 3''-O-acetyl-ADP-D-ribose isomers. The chain is ADP-ribosylhydrolase ARH3 (adprs) from Danio rerio (Zebrafish).